Reading from the N-terminus, the 428-residue chain is Protein CANDIDATE G-PROTEIN COUPLED RECEPTOR 6 (428 aa).

Residues 1–22 (MTILPFLAAVFVLQLLSTLTVA) form the signal peptide. Residues Asn31, Asn89, and Asn157 are each glycosylated (N-linked (GlcNAc...) asparagine). 7 helical membrane passes run 173–193 (LYLVFFLCYLSFLCFWLCFCW), 202–222 (IHLLMTALLLVKSLTLICAAV), 238–258 (IVFYIFQFISVVLLFMVIVLI), 276–296 (LLVIVVPLQVLANIASIVIGE), 310–330 (IFFLADITCCCAIVFAMVWSM), 356–376 (FYVLVIGYLFFTRIVVVVMKM), and 385–405 (VSNAAEEIATLSFYCLMFYMF).

Belongs to the LU7TM family.

The protein localises to the membrane. Its function is as follows. G-protein coupled receptor. Plays a role in plants and microbes interactions. This chain is Protein CANDIDATE G-PROTEIN COUPLED RECEPTOR 6, found in Arabidopsis thaliana (Mouse-ear cress).